Reading from the N-terminus, the 504-residue chain is Cytochrome P450 6a9 (504 aa).

A heme-binding site is contributed by cysteine 449.

This sequence belongs to the cytochrome P450 family. Heme serves as cofactor.

It is found in the endoplasmic reticulum membrane. Its subcellular location is the microsome membrane. Its function is as follows. Involved in the metabolism of insect hormones and in the breakdown of synthetic insecticides. The sequence is that of Cytochrome P450 6a9 (Cyp6a9) from Drosophila melanogaster (Fruit fly).